Here is a 456-residue protein sequence, read N- to C-terminus: Taurine--pyruvate aminotransferase (456 aa).

The residue at position 280 (K280) is an N6-(pyridoxal phosphate)lysine.

It belongs to the class-III pyridoxal-phosphate-dependent aminotransferase family. Homotetramer. Requires pyridoxal 5'-phosphate as cofactor.

It carries out the reaction taurine + pyruvate = sulfoacetaldehyde + L-alanine. Its pathway is organosulfur degradation; alkanesulfonate degradation. Its function is as follows. Involved in an anaerobic respiration pathway that converts the sulfonate taurine (2-aminoethanesulfonate) to ammonia, acetate and sulfide. Catalyzes the initial metabolic reaction of anaerobic taurine degradation, i.e. the transamination reaction between taurine and pyruvate leading to sulfoacetaldehyde and alanine. This chain is Taurine--pyruvate aminotransferase, found in Bilophila wadsworthia (strain 3_1_6).